A 166-amino-acid chain; its full sequence is Endoribonuclease YbeY (166 aa).

Zn(2+) is bound by residues histidine 132, histidine 136, and histidine 142.

The protein belongs to the endoribonuclease YbeY family. Zn(2+) is required as a cofactor.

It localises to the cytoplasm. Single strand-specific metallo-endoribonuclease involved in late-stage 70S ribosome quality control and in maturation of the 3' terminus of the 16S rRNA. This Clostridium botulinum (strain Kyoto / Type A2) protein is Endoribonuclease YbeY.